The chain runs to 151 residues: Calmodulin-like protein 9 (151 aa).

EF-hand domains lie at 8-43 (EQIQ…MGKN), 44-79 (PKAE…NTSQ), 81-116 (SASD…MGMK), and 117-151 (ITAE…AASY). Residues Asp94, Asp96, Asp98, Glu105, Asp130, Asp132, Asp134, and Glu141 each coordinate Ca(2+).

The protein belongs to the calmodulin family. Interacts with IQD1. Interacts with ILK1. Binds to ABCG36. In terms of tissue distribution, expressed in leaves, flowers and siliques.

Functionally, potential calcium sensor. The sequence is that of Calmodulin-like protein 9 from Arabidopsis thaliana (Mouse-ear cress).